Here is a 296-residue protein sequence, read N- to C-terminus: Small ribosomal subunit protein uS2 (296 aa).

A disordered region spans residues 246 to 272; it reads QAKDGSVVDSGKGKSIAAHKGGGKASK.

The protein belongs to the universal ribosomal protein uS2 family.

The chain is Small ribosomal subunit protein uS2 from Anaplasma phagocytophilum (strain HZ).